The sequence spans 323 residues: Phosphatidylethanolamine:ceramide ethanolaminephosphotransferase (323 aa).

Residues Met-1–Gln-26 lie on the Cytoplasmic side of the membrane. Residues Val-27–Ile-47 traverse the membrane as a helical segment. The Extracellular portion of the chain corresponds to Thr-48–Pro-73. The chain crosses the membrane as a helical span at residues Phe-74 to Ala-94. The Cytoplasmic segment spans residues Phe-95–Arg-147. The helical transmembrane segment at Phe-148–Leu-168 threads the bilayer. The Extracellular segment spans residues Pro-169–Thr-211. His-210 is a catalytic residue. Residues Val-212–Phe-232 form a helical membrane-spanning segment. A topological domain (cytoplasmic) is located at residue Arg-233. Residues Pro-234–Tyr-254 form a helical membrane-spanning segment. Residues His-253 and Asp-257 contribute to the active site. The Extracellular segment spans residues Thr-255–Asp-257. The chain crosses the membrane as a helical span at residues Val-258 to Gly-278. Residues Ala-279–Ser-323 lie on the Cytoplasmic side of the membrane.

This sequence belongs to the sphingomyelin synthase family.

It is found in the membrane. Its function is as follows. Bidirectional lipid ethanolaminephosphotransferase capable of converting phosphatidylethanolamine (PE) and ceramide to ethanolamine-phosphorylceramide (EPC) and diacylglycerol (DAG) and vice versa. Direction is dependent on the relative concentrations of DAG and ceramide as phosphoethanolamine acceptors. Does not function strictly as a SM synthase. Essential for viability of the pathogenic bloodstream stage of this human protozoan parasite and, consequently, can be considered as potential drug target. In Trypanosoma brucei brucei (strain 927/4 GUTat10.1), this protein is Phosphatidylethanolamine:ceramide ethanolaminephosphotransferase.